Here is a 456-residue protein sequence, read N- to C-terminus: MSQTTTNPHVAVLAFPFSTHAAPLLAVVRRLAAAAPHAVFSFFSTSQSNASIFHDSMHTMQCNIKSYDISDGVPEGYVFAGRPQEDIELFTRAAPESFRQGMVMAVAETGRPVSCLVADAFIWFAADMAAEMGLAWLPFWTAGPNSLSTHVYIDEIREKIGVSGIQGREDELLNFIPGMSKVRFRDLQEGIVFGNLNSLFSRMLHRMGQVLPKATAVFINSFEELDDSLTNDLKSKLKTYLNIGPFNLITPPPVVPNTTGCLQWLKERKPTSVVYISFGTVTTPPPAEVVALSEALEASRVPFIWSLRDKARVHLPEGFLEKTRGYGMVVPWAPQAEVLAHEAVGAFVTHCGWNSLWESVAGGVPLICRPFFGDQRLNGRMVEDVLEIGVRIEGGVFTKSGLMSCFDQILSQEKGKKLRENLRALRETADRAVGPKGSSTENFITLVDLVSKPKDV.

Ser18 contributes to the kaempferol binding site. Residue Ser18 coordinates quercetin. UDP is bound at residue Thr19. Residue Thr19 participates in UDP-alpha-D-glucose binding. 2 residues coordinate kaempferol: His20 and Gln84. Residue His20 is the Proton acceptor of the active site. Gln84 contributes to the quercetin binding site. The active-site Charge relay is the Asp119. UDP-alpha-D-glucose is bound at residue Thr141. Kaempferol-binding residues include His150 and Gln188. 2 residues coordinate quercetin: His150 and Gln188. UDP-binding residues include Thr280, Ser306, Trp332, Ala333, and His350. 9 residues coordinate UDP-alpha-D-glucose: Thr280, Ser306, Trp332, Ala333, His350, Trp353, Asn354, Ser355, and Glu358. Residues Asn354, Ser355, and Glu358 each contribute to the UDP site. Quercetin is bound at residue Gly373. UDP-alpha-D-glucose is bound by residues Asp374 and Gln375.

It belongs to the UDP-glycosyltransferase family. As to expression, detected only in berry skin.

The enzyme catalyses an anthocyanidin + UDP-alpha-D-glucose + H(+) = an anthocyanidin 3-O-beta-D-glucoside + UDP. The catalysed reaction is cyanidin + UDP-alpha-D-glucose = cyanidin 3-O-beta-D-glucoside + UDP + H(+). It catalyses the reaction delphinidin + UDP-alpha-D-glucose = delphinidin 3-O-beta-D-glucoside + UDP. It carries out the reaction peonidin + UDP-alpha-D-glucose = peonidin 3-O-beta-D-glucoside + UDP. The enzyme catalyses pelargonidin + UDP-alpha-D-glucose = pelargonidin 3-O-beta-D-glucoside + UDP. The catalysed reaction is malvidin + UDP-alpha-D-glucose = malvidin 3-O-beta-D-glucoside + UDP. It catalyses the reaction a flavonol + UDP-alpha-D-glucose = a flavonol 3-O-beta-D-glucoside + UDP + H(+). It functions in the pathway pigment biosynthesis; anthocyanin biosynthesis. With respect to regulation, inhibited by Mn(2+) and Zn(2+). In terms of biological role, in the presence of other necessary color factors, this glycosylation reaction allows the accumulation of anthocyanin pigments. Involved in the formation of red wine pigments. UDP-glucose (UDP-Glc) is the physiological sugar donor, and cyanidin is the natural acceptor in vivo. Can glucosylate the anthocyanidins delphinidin, peonidin, pelargonidin and malvidin. The flavonols quercitin and kaempferol can also be glucosylated in vitro, but with glucosylation rates 50-100 times lower than cyanidin. In vitro, can use UDP-Glc, UDP-5SGlc, UDP-Xyl, UDP-Man, UDP-Gal, UDP-GlcNAc, GDP-Glc, dTDP-Glc and dTDP-Xyl as sugar donors, but not UDP-6OMeGal, UDP-Ara, UDP-6FGal, UDP-GlcN, UDP-2FGal, UDP-5SAra, GDP-Man, GDP-Fuc, UDP-Fuc or UDP-Rha. The chain is Anthocyanidin 3-O-glucosyltransferase UFGT from Vitis vinifera (Grape).